The following is a 621-amino-acid chain: Chaperone protein HscA homolog (621 aa).

It belongs to the heat shock protein 70 family.

Its function is as follows. Chaperone involved in the maturation of iron-sulfur cluster-containing proteins. Has a low intrinsic ATPase activity which is markedly stimulated by HscB. This is Chaperone protein HscA homolog from Polynucleobacter asymbioticus (strain DSM 18221 / CIP 109841 / QLW-P1DMWA-1) (Polynucleobacter necessarius subsp. asymbioticus).